The primary structure comprises 317 residues: Malate dehydrogenase (317 aa).

Residues 7–13 (GAAGGIG) and Asp-34 each bind NAD(+). Substrate-binding residues include Arg-81 and Arg-87. Residues Asn-94 and 117–119 (VTN) each bind NAD(+). 2 residues coordinate substrate: Asn-119 and Arg-153. His-177 functions as the Proton acceptor in the catalytic mechanism. Residue Met-231 coordinates NAD(+).

The protein belongs to the LDH/MDH superfamily. MDH type 1 family. As to quaternary structure, homodimer.

It carries out the reaction (S)-malate + NAD(+) = oxaloacetate + NADH + H(+). Catalyzes the reversible oxidation of malate to oxaloacetate. The sequence is that of Malate dehydrogenase from Actinobacillus pleuropneumoniae serotype 5b (strain L20).